A 452-amino-acid polypeptide reads, in one-letter code: Probable ECA polymerase (452 aa).

The next 11 helical transmembrane spans lie at 6 to 26, 37 to 57, 63 to 83, 118 to 138, 155 to 175, 181 to 201, 207 to 227, 228 to 248, 341 to 361, 378 to 398, and 410 to 430; these read FSGL…LTWF, VFFS…TSVL, VGVA…CFYG, VILM…NGFL, GVAL…VYFL, AWLF…MIVG, IIIA…ISLW, MLAA…LKRY, LVVM…GLII, YKAA…IVLA, and VFFL…FWLF.

The protein belongs to the WzyE family. In terms of assembly, probably part of a complex composed of WzxE, WzyE and WzzE.

It localises to the cell inner membrane. It participates in bacterial outer membrane biogenesis; enterobacterial common antigen biosynthesis. Functionally, probably involved in the polymerization of enterobacterial common antigen (ECA) trisaccharide repeat units. The protein is Probable ECA polymerase of Salmonella arizonae (strain ATCC BAA-731 / CDC346-86 / RSK2980).